Reading from the N-terminus, the 126-residue chain is Large ribosomal subunit protein bL12 (126 aa).

Belongs to the bacterial ribosomal protein bL12 family. In terms of assembly, homodimer. Part of the ribosomal stalk of the 50S ribosomal subunit. Forms a multimeric L10(L12)X complex, where L10 forms an elongated spine to which 2 to 4 L12 dimers bind in a sequential fashion. Binds GTP-bound translation factors.

Its function is as follows. Forms part of the ribosomal stalk which helps the ribosome interact with GTP-bound translation factors. Is thus essential for accurate translation. The polypeptide is Large ribosomal subunit protein bL12 (Desulfatibacillum aliphaticivorans).